The primary structure comprises 91 residues: Large ribosomal subunit protein uL29 (91 aa).

The tract at residues 67-91 (AAPLAESSAPAKTKSRARKSKKEAL) is disordered. The span at 79–91 (TKSRARKSKKEAL) shows a compositional bias: basic residues.

Belongs to the universal ribosomal protein uL29 family.

The protein is Large ribosomal subunit protein uL29 of Acidobacterium capsulatum (strain ATCC 51196 / DSM 11244 / BCRC 80197 / JCM 7670 / NBRC 15755 / NCIMB 13165 / 161).